A 487-amino-acid polypeptide reads, in one-letter code: MFRQLKKNLVATLIAAMTIGQVAPAFADSADTLPDMGTSAGSTLSIGQEMQMGDYYVRQLRGSAPLINDPLLTQYINSLGMRLVSHANSVKTPFHFFLINNDEINAFAFFGGNVVLHSALFRYSDNESQLASVMAHEISHVTQRHLARAMEDQQRSAPLTWVGALGSILLAMASPQAGMAALTGTLAGTRQGMISFTQQNEQEADRIGIQVLQRSGFDPQAMPTFLEKLLDQARYSSRPPEILLTHPLPESRLADARNRANQMRPMVVQSSEDFYLAKARTLGMYNSGRNQLTSDLLDEWAKGNVRQQRAAQYGRALQAMEANKYDEARKTLQPLLAAEPGNAWYLDLATDIDLGQNKANEAINRLKNARDLRTNPVLQLNLANAYLQGGQPQEAANILNRYTFNNKDDSNGWDLLAQAEAALNNRDQELAARAEGYALAGRLDQAISLLSSASSQVKLGSLQQARYDARIDQLRQLQERFKPYTKM.

Residues 1–27 (MFRQLKKNLVATLIAAMTIGQVAPAFA) form the signal peptide. His136 provides a ligand contact to Zn(2+). Glu137 is a catalytic residue. The Zn(2+) site is built by His140 and Glu201. Asp205 functions as the Proton donor in the catalytic mechanism. TPR repeat units follow at residues 309–342 (RAAQ…EPGN), 344–376 (WYLD…RTNP), 377–409 (VLQL…NKDD), and 427–460 (DQEL…VKLG).

Belongs to the peptidase M48 family. BepA subfamily. In terms of assembly, interacts with BamA and LoiP. Zn(2+) is required as a cofactor.

It is found in the periplasm. Its activity is regulated as follows. Protease activity is inhibited by the metal chelating reagents 1,10-phenanthroline and EDTA. In terms of biological role, functions both as a chaperone and a metalloprotease. Maintains the integrity of the outer membrane by promoting either the assembly or the elimination of outer membrane proteins, depending on their folding state. Promotes disulfide rearrangement of LptD during its biogenesis, and proteolytic degradation of LptD and BamA when their proper assembly is compromised. May facilitate membrane attachment of LoiP under unfavorable conditions. The sequence is that of Beta-barrel assembly-enhancing protease from Escherichia coli (strain K12).